Consider the following 407-residue polypeptide: Phosphopentomutase (407 aa).

Residues aspartate 10, aspartate 306, histidine 311, aspartate 347, histidine 348, and histidine 359 each coordinate Mn(2+).

This sequence belongs to the phosphopentomutase family. Requires Mn(2+) as cofactor.

It localises to the cytoplasm. The enzyme catalyses 2-deoxy-alpha-D-ribose 1-phosphate = 2-deoxy-D-ribose 5-phosphate. It carries out the reaction alpha-D-ribose 1-phosphate = D-ribose 5-phosphate. It functions in the pathway carbohydrate degradation; 2-deoxy-D-ribose 1-phosphate degradation; D-glyceraldehyde 3-phosphate and acetaldehyde from 2-deoxy-alpha-D-ribose 1-phosphate: step 1/2. Functionally, isomerase that catalyzes the conversion of deoxy-ribose 1-phosphate (dRib-1-P) and ribose 1-phosphate (Rib-1-P) to deoxy-ribose 5-phosphate (dRib-5-P) and ribose 5-phosphate (Rib-5-P), respectively. This chain is Phosphopentomutase, found in Shigella dysenteriae serotype 1 (strain Sd197).